A 389-amino-acid chain; its full sequence is Putative F-box protein At3g10240 (389 aa).

The interval 1-26 (MEQQEEKRKIKAYQRKSKRSKSGSSS) is disordered. Residues 9–21 (KIKAYQRKSKRSK) are compositionally biased toward basic residues. An F-box domain is found at 21–66 (KSGSSSIPLDLVSEILLRLPEKSVARFRCVSKPWSSITTEPYFINL).

The sequence is that of Putative F-box protein At3g10240 from Arabidopsis thaliana (Mouse-ear cress).